Consider the following 336-residue polypeptide: Anthranilate phosphoribosyltransferase (336 aa).

Residues G79, 82–83 (GD), T87, 89–92 (NIST), 107–115 (KHGNRAMSS), and S119 each bind 5-phospho-alpha-D-ribose 1-diphosphate. G79 serves as a coordination point for anthranilate. Residue S91 participates in Mg(2+) binding. N110 is a binding site for anthranilate. R165 is a binding site for anthranilate. Mg(2+) is bound by residues D225 and E226.

It belongs to the anthranilate phosphoribosyltransferase family. In terms of assembly, homodimer. Requires Mg(2+) as cofactor.

The enzyme catalyses N-(5-phospho-beta-D-ribosyl)anthranilate + diphosphate = 5-phospho-alpha-D-ribose 1-diphosphate + anthranilate. The protein operates within amino-acid biosynthesis; L-tryptophan biosynthesis; L-tryptophan from chorismate: step 2/5. In terms of biological role, catalyzes the transfer of the phosphoribosyl group of 5-phosphorylribose-1-pyrophosphate (PRPP) to anthranilate to yield N-(5'-phosphoribosyl)-anthranilate (PRA). This is Anthranilate phosphoribosyltransferase from Dictyoglomus turgidum (strain DSM 6724 / Z-1310).